The following is a 258-amino-acid chain: Thrombin-like enzyme ancrod-2 (258 aa).

An N-terminal signal peptide occupies residues 1–18 (MVLIRVLANLVILQLSYA). The propeptide occupies 19-24 (QKSSEL). In terms of domain architecture, Peptidase S1 spans 25-251 (VIGGDECNIN…HLHWILSIMA (227 aa)). Disulfide bonds link cysteine 31–cysteine 165, cysteine 52–cysteine 68, cysteine 102–cysteine 256, cysteine 144–cysteine 212, cysteine 176–cysteine 191, and cysteine 202–cysteine 227. Residues histidine 67 and aspartate 112 each act as charge relay system in the active site. 2 N-linked (GlcNAc...) asparagine glycosylation sites follow: asparagine 123 and asparagine 172. Serine 206 acts as the Charge relay system in catalysis. An N-linked (GlcNAc...) asparagine glycan is attached at asparagine 253.

The protein belongs to the peptidase S1 family. Snake venom subfamily. Monomer. As to expression, expressed by the venom gland.

The protein resides in the secreted. It catalyses the reaction Selective cleavage of Arg-|-Xaa bond in fibrinogen, to form fibrin, and release fibrinopeptide A. The specificity of further degradation of fibrinogen varies with species origin of the enzyme.. Thrombin-like snake venom serine protease. Cleaves fibrinogen (FGA) to split of fibrinopeptides AM, AO, and AY; the aberrant fibrinogen is then incapable of being cross-linked, forming easily dispersible clots. This Calloselasma rhodostoma (Malayan pit viper) protein is Thrombin-like enzyme ancrod-2.